The sequence spans 502 residues: Neuronal acetylcholine receptor subunit alpha-7 (502 aa).

The first 22 residues, 1–22 (MRCSPGGVWLALAASLLHVSLQ), serve as a signal peptide directing secretion. Over 23 to 233 (GEFQRKLYKE…VTMRRRTLYY (211 aa)) the chain is Extracellular. Ca(2+) contacts are provided by Arg-42 and Val-44. Residues Asn-46, Asn-90, and Asn-133 are each glycosylated (N-linked (GlcNAc...) asparagine). A disulfide bridge connects residues Cys-150 and Cys-164. 2 residues coordinate Ca(2+): Ser-172 and Tyr-210. Residues Cys-212 and Cys-213 are joined by a disulfide bond. Transmembrane regions (helical) follow at residues 234-254 (GLNL…VFLL), 259-279 (GEKI…MLLV), and 292-315 (LIAQ…VIVL). The tract at residues 260–267 (EKISLGIT) is essential for TMEM35A/NACHO-mediated proper subunit assembly and trafficking to cell membrane. The Cytoplasmic segment spans residues 316–466 (QYHHHDPDGG…CSEWKFAACV (151 aa)). The helical transmembrane segment at 467 to 489 (VDRLCLMAFSVFTIICTIGILMS) threads the bilayer.

It belongs to the ligand-gated ion channel (TC 1.A.9) family. Acetylcholine receptor (TC 1.A.9.1) subfamily. Alpha-7/CHRNA7 sub-subfamily. In terms of assembly, homopentamer. Can also form heteropentamers with CHRNB2, mainly found in basal forebrain cholinergic neurons. Interacts with RIC3; which is required for proper folding and assembly. Interacts with LYPD6. Interacts with CANX. Post-translationally, glycosylations at Asn-46, Asn-90 and Asn-133 are essential for TMEM35A/NACHO-mediated proper subunit assembly and trafficking to the cell membrane. Expressed in neuronal cells. Expressed in macrophages (at protein level).

Its subcellular location is the postsynaptic cell membrane. It localises to the cell membrane. It carries out the reaction Ca(2+)(in) = Ca(2+)(out). It catalyses the reaction K(+)(in) = K(+)(out). The enzyme catalyses Na(+)(in) = Na(+)(out). The catalysed reaction is choline(out) = choline(in). It carries out the reaction NH4(+)(in) = NH4(+)(out). It catalyses the reaction L-arginine(in) = L-arginine(out). The enzyme catalyses guanidine(out) = guanidine(in). Its activity is regulated as follows. Activated by a myriad of ligands such as acetylcholine, cytisine, nicotine, choline and epibatidine. Oligomeric amyloid-beta protein 42 activates specifially CHRNA7:CHRNB2 nAchRs. Activity is modulated by positive allosteric modulators (PAMs), such as flavonoids, with a wide range of chemical diversity, pharmacological sensitivity and efficacy. AChR activity is inhibited by the antagonists alpha-conotoxons RgIA, ImI and ImII, small disulfide-constrained peptides from cone snails. Alpha-conotoxin PnIC selectively inhibits CHRNA7:CHRNB2 over CHRNA7 homopentamer. In terms of biological role, component of neuronal acetylcholine receptors (nAChRs) that function as pentameric, ligand-gated cation channels with high calcium permeability among other activities. nAChRs are excitatory neurotrasnmitter receptors formed by a collection of nAChR subunits known to mediate synaptic transmission in the nervous system and the neuromuscular junction. Each nAchR subunit confers differential attributes to channel properties, including activation, deactivation and desensitization kinetics, pH sensitivity, cation permeability, and binding to allosteric modulators. CHRNA7 forms homopentameric neuronal acetylcholine receptors abundantly expressed in the central nervous system, characterized by fast desensitization and high calcium permeability. Also forms heteropentamers with CHRNB2, mainly expressed in basal forebrain cholinergic neurons. Involved in the modulation of calcium-dependent signaling pathways and influences the release of neurotransmitters, including dopamine, glutamate and GABA. Also expressed in non-neuronal cells such as immune cells like lymphocytes, monocytes and macrophages. In T cells, activation induces metabotropic signaling that results in an increase of intracellular Ca2+ concentrations, independent of ionotropic receptor functions. In macrophages, required for acetylcholine-mediated inhibition of TNF and other inflammatory cytokine release. Once activated by acetylcholine, nicotine or other agonists, selectively inhibits production of pro-inflammatory cytokines while leaving anti-inflammatory cytokines undisturbed. Stimulates the cholinergic anti-inflammatory pathway, controlling inflammation by inhibiting NFKB nuclear translocation and activating the JAK2-STAT3 pathway, independently of ion channel activity. Also expressed in the urothelium where it modulates reflex bladder activity by increasing intracellular calcium through internal stores and decreasing basal ATP release. In Homo sapiens (Human), this protein is Neuronal acetylcholine receptor subunit alpha-7.